An 87-amino-acid polypeptide reads, in one-letter code: Small ribosomal subunit protein bS20 (87 aa).

The segment covering 1–19 (MANHKSALKRHRQSIKRNL) has biased composition (basic residues). Residues 1–22 (MANHKSALKRHRQSIKRNLRNN) form a disordered region.

The protein belongs to the bacterial ribosomal protein bS20 family.

Functionally, binds directly to 16S ribosomal RNA. The protein is Small ribosomal subunit protein bS20 of Maridesulfovibrio salexigens (strain ATCC 14822 / DSM 2638 / NCIMB 8403 / VKM B-1763) (Desulfovibrio salexigens).